Consider the following 150-residue polypeptide: Large ribosomal subunit protein bL9 (150 aa).

This sequence belongs to the bacterial ribosomal protein bL9 family.

Its function is as follows. Binds to the 23S rRNA. The chain is Large ribosomal subunit protein bL9 from Paraburkholderia xenovorans (strain LB400).